The primary structure comprises 181 residues: Acetylcholinesterase (181 aa).

Catalysis depends on Ser76, which acts as the Acyl-ester intermediate. The Charge relay system role is filled by Glu132. The tract at residues 162 to 181 (WQDQDNGGLPLTGNPTXPHN) is disordered.

The protein belongs to the type-B carboxylesterase/lipase family. In terms of processing, the N-terminus is blocked. Expressed by the venom gland. Is also probably expressed by liver and muscle.

It localises to the synapse. The protein localises to the secreted. The protein resides in the cell membrane. The catalysed reaction is acetylcholine + H2O = choline + acetate + H(+). Functionally, in venom, its toxic role is unclear: it could result in less musculatory control by rapidly hydrolyzing acetylcholine, or that it works synergistically with alkaline phosphatase (ALP) in paralyzing prey through hypotension. In muscle, it terminates signal transduction at the neuromuscular junction by rapid hydrolysis of the acetylcholine released into the synaptic cleft. In liver, its function is unclear: it could serve as a safeguard against any diffusion of acetylcholine from synapses into the circulation. This is Acetylcholinesterase (ACHE) from Naja oxiana (Central Asian cobra).